Here is a 518-residue protein sequence, read N- to C-terminus: 2-isopropylmalate synthase (518 aa).

One can recognise a Pyruvate carboxyltransferase domain in the interval 5–269; that stretch reads IIVLDTTLRD…STNVRLKELI (265 aa). Residues D14, H204, H206, and N240 each coordinate Mn(2+). The interval 397-518 is regulatory domain; it reads ELDSFQVVTN…HDSQAPVSAR (122 aa).

Belongs to the alpha-IPM synthase/homocitrate synthase family. LeuA type 1 subfamily. In terms of assembly, homodimer. The cofactor is Mn(2+).

It localises to the cytoplasm. It catalyses the reaction 3-methyl-2-oxobutanoate + acetyl-CoA + H2O = (2S)-2-isopropylmalate + CoA + H(+). The protein operates within amino-acid biosynthesis; L-leucine biosynthesis; L-leucine from 3-methyl-2-oxobutanoate: step 1/4. Functionally, catalyzes the condensation of the acetyl group of acetyl-CoA with 3-methyl-2-oxobutanoate (2-ketoisovalerate) to form 3-carboxy-3-hydroxy-4-methylpentanoate (2-isopropylmalate). The polypeptide is 2-isopropylmalate synthase (Geobacillus sp. (strain Y412MC10)).